The chain runs to 124 residues: Hydrogenase maturation factor HypA (124 aa).

His2 is a binding site for Ni(2+). Zn(2+) is bound by residues Cys78, Cys81, Cys97, and Cys100.

Belongs to the HypA/HybF family.

Its function is as follows. Involved in the maturation of [NiFe] hydrogenases. Required for nickel insertion into the metal center of the hydrogenase. This Methanocaldococcus jannaschii (strain ATCC 43067 / DSM 2661 / JAL-1 / JCM 10045 / NBRC 100440) (Methanococcus jannaschii) protein is Hydrogenase maturation factor HypA.